The chain runs to 855 residues: Coiled-coil domain-containing protein 87 (855 aa).

Disordered stretches follow at residues 23-43 (LFPS…QDAT) and 278-302 (SRPS…PTSP). The segment covering 287 to 296 (PSHSPSSESH) has biased composition (low complexity). Coiled coils occupy residues 387-413 (TRRL…EASG) and 764-789 (RSYL…ESVF).

This sequence belongs to the CCDC87 family. In terms of tissue distribution, specifically expressed in testis (at protein level). Not detected in other tissues tested (at protein level). In the testis, localizes to pachytene spermatocytes and spermatids.

Functionally, plays a role in spermatogenesis, where it is important for normal sperm head morphology. Also required for the acrosome reaction and thus normal male fertility. This is Coiled-coil domain-containing protein 87 (Ccdc87) from Mus musculus (Mouse).